Here is a 258-residue protein sequence, read N- to C-terminus: Phycoerythrobilin:ferredoxin oxidoreductase (258 aa).

The protein belongs to the HY2 family.

It catalyses the reaction (3Z)-phycoerythrobilin + oxidized 2[4Fe-4S]-[ferredoxin] = 15,16-dihydrobiliverdin + reduced 2[4Fe-4S]-[ferredoxin] + 2 H(+). In terms of biological role, catalyzes the two-electron reduction of the C2 and C3(1) diene system of 15,16-dihydrobiliverdin. This chain is Phycoerythrobilin:ferredoxin oxidoreductase, found in Prochlorococcus marinus (strain NATL1A).